Consider the following 2280-residue polypeptide: Acetyl-CoA carboxylase (2280 aa).

Positions 68-577 (VITSILIANN…TTGWLDRLIA (510 aa)) constitute a Biotin carboxylation domain. The 193-residue stretch at 226–418 (ETNIVTVDDD…LPAAQLQVAM (193 aa)) folds into the ATP-grasp domain. 266 to 271 (GGGGKG) lines the ATP pocket. Residues Glu375, Glu389, and Asn391 each coordinate Mn(2+). Residue Arg393 is part of the active site. Residues 704–778 (LEQENDPTQL…DAGDILGILT (75 aa)) enclose the Biotinyl-binding domain. An N6-biotinyllysine modification is found at Lys745. Phosphoserine occurs at positions 1179 and 1181. The 340-residue stretch at 1524 to 1863 (PYPTKEWLQP…KRNNPVPISP (340 aa)) folds into the CoA carboxyltransferase N-terminal domain. Residues 1524–2181 (PYPTKEWLQP…EHYALQKITQ (658 aa)) form a carboxyltransferase region. CoA is bound by residues Arg1772, Lys2074, and Arg2076. A CoA carboxyltransferase C-terminal domain is found at 1867 to 2181 (TWDRDVEFYP…EHYALQKITQ (315 aa)).

In terms of assembly, interacts with sad1. Biotin serves as cofactor. It depends on Mn(2+) as a cofactor.

It is found in the cytoplasm. The enzyme catalyses hydrogencarbonate + acetyl-CoA + ATP = malonyl-CoA + ADP + phosphate + H(+). It catalyses the reaction N(6)-biotinyl-L-lysyl-[protein] + hydrogencarbonate + ATP = N(6)-carboxybiotinyl-L-lysyl-[protein] + ADP + phosphate + H(+). The protein operates within lipid metabolism; malonyl-CoA biosynthesis; malonyl-CoA from acetyl-CoA: step 1/1. Its activity is regulated as follows. By phosphorylation. Functionally, carries out three functions: biotin carboxyl carrier protein, biotin carboxylase and carboxyltransferase. In Schizosaccharomyces pombe (strain 972 / ATCC 24843) (Fission yeast), this protein is Acetyl-CoA carboxylase (cut6).